A 426-amino-acid chain; its full sequence is 3-phosphoshikimate 1-carboxyvinyltransferase (426 aa).

Lys22, Ser23, and Arg27 together coordinate 3-phosphoshikimate. Position 22 (Lys22) interacts with phosphoenolpyruvate. Residues Gly96 and Arg124 each coordinate phosphoenolpyruvate. 7 residues coordinate 3-phosphoshikimate: Ser170, Ser171, Gln172, Ser198, Asp314, Asn337, and Lys341. Gln172 contributes to the phosphoenolpyruvate binding site. Asp314 serves as the catalytic Proton acceptor. Arg345, Arg387, and Lys412 together coordinate phosphoenolpyruvate.

Belongs to the EPSP synthase family. As to quaternary structure, monomer.

The protein resides in the cytoplasm. The enzyme catalyses 3-phosphoshikimate + phosphoenolpyruvate = 5-O-(1-carboxyvinyl)-3-phosphoshikimate + phosphate. It functions in the pathway metabolic intermediate biosynthesis; chorismate biosynthesis; chorismate from D-erythrose 4-phosphate and phosphoenolpyruvate: step 6/7. In terms of biological role, catalyzes the transfer of the enolpyruvyl moiety of phosphoenolpyruvate (PEP) to the 5-hydroxyl of shikimate-3-phosphate (S3P) to produce enolpyruvyl shikimate-3-phosphate and inorganic phosphate. This Aliivibrio fischeri (strain ATCC 700601 / ES114) (Vibrio fischeri) protein is 3-phosphoshikimate 1-carboxyvinyltransferase.